Reading from the N-terminus, the 296-residue chain is Maltose/maltodextrin transport system permease protein MalG (296 aa).

Over 1 to 12 (MAMVQPKSQKWR) the chain is Cytoplasmic. A helical transmembrane segment spans residues 13 to 35 (LLATHLLMFTFIAMILFPLLMVI). The Periplasmic portion of the chain corresponds to 36–88 (TISLRPGNFATGSLIPENISWEHWKLALGYSVVSPDGRVTPPPFPVMLWLWNS). The 197-residue stretch at 85 to 281 (LWNSVKVAFI…LPITIVFLVA (197 aa)) folds into the ABC transmembrane type-1 domain. Residues 89–111 (VKVAFITAVGIVTLSTTCAYAFA) form a helical membrane-spanning segment. Residues 112–123 (RMHFRGKSTLLK) lie on the Cytoplasmic side of the membrane. A helical membrane pass occupies residues 124–143 (GMLIFQMFPAVLSLVALYAL). At 144 to 152 (FDRLGEYVP) the chain is on the periplasmic side. The helical transmembrane segment at 153–175 (FIGLNTHGGVIFAYLGGIALHVW) threads the bilayer. The Cytoplasmic portion of the chain corresponds to 176-205 (TIKGYFETIDGSLEEAAALDGATPWQAFRM). The helical transmembrane segment at 206 to 228 (VLLPLSVPILAVVFILSFIGVIT) threads the bilayer. Residues 229–257 (EVPVASLLLRDVNNYTLAVGMQQYLNPQN) lie on the Periplasmic side of the membrane. A helical transmembrane segment spans residues 258–280 (YLWGDFAAAAVLSALPITIVFLV). At 281–296 (AQRWLVSGLTAGGVKG) the chain is on the cytoplasmic side.

Belongs to the binding-protein-dependent transport system permease family. MalFG subfamily. The complex is composed of two ATP-binding proteins (MalK), two transmembrane proteins (MalG and MalF) and a solute-binding protein (MalE).

The protein localises to the cell inner membrane. Part of the ABC transporter complex MalEFGK involved in maltose/maltodextrin import. Probably responsible for the translocation of the substrate across the membrane. The protein is Maltose/maltodextrin transport system permease protein MalG (malG) of Photorhabdus laumondii subsp. laumondii (strain DSM 15139 / CIP 105565 / TT01) (Photorhabdus luminescens subsp. laumondii).